Here is an 834-residue protein sequence, read N- to C-terminus: Periplasmic nitrate reductase (834 aa).

A signal peptide (tat-type signal) is located at residues 1-29 (MNLTRREFAKANAAAIAAAAAGLPILVRA). One can recognise a 4Fe-4S Mo/W bis-MGD-type domain in the interval 41–97 (LDWNKAPCRFCGTGCSVMVATRDGQVVATHGDIKAEVNRGINCVKGYFLSKIMYGSD). [4Fe-4S] cluster is bound by residues C48, C51, C55, and C83. Residues K85, Q152, N177, C181, 214–221 (WGSNMAEM), 245–249 (STFEH), 264–266 (QTD), M375, Q379, N485, 511–512 (SD), K534, D561, and 721–730 (TGRVLEHWHT) contribute to the Mo-bis(molybdopterin guanine dinucleotide) site. Residue F797 participates in substrate binding. Mo-bis(molybdopterin guanine dinucleotide)-binding residues include N805 and K822.

It belongs to the prokaryotic molybdopterin-containing oxidoreductase family. NasA/NapA/NarB subfamily. In terms of assembly, component of the periplasmic nitrate reductase NapAB complex composed of NapA and NapB. [4Fe-4S] cluster serves as cofactor. Requires Mo-bis(molybdopterin guanine dinucleotide) as cofactor. Predicted to be exported by the Tat system. The position of the signal peptide cleavage has not been experimentally proven.

The protein localises to the periplasm. The catalysed reaction is 2 Fe(II)-[cytochrome] + nitrate + 2 H(+) = 2 Fe(III)-[cytochrome] + nitrite + H2O. In terms of biological role, catalytic subunit of the periplasmic nitrate reductase complex NapAB. Receives electrons from NapB and catalyzes the reduction of nitrate to nitrite. The polypeptide is Periplasmic nitrate reductase (Pseudomonas paraeruginosa (strain DSM 24068 / PA7) (Pseudomonas aeruginosa (strain PA7))).